Here is a 588-residue protein sequence, read N- to C-terminus: A-type ATP synthase subunit A 3 (588 aa).

234-241 is an ATP binding site; the sequence is GPFGSGKT.

The protein belongs to the ATPase alpha/beta chains family. In terms of assembly, has multiple subunits with at least A(3), B(3), C, D, E, F, H, I and proteolipid K(x).

The protein resides in the cell membrane. The catalysed reaction is ATP + H2O + 4 H(+)(in) = ADP + phosphate + 5 H(+)(out). Its function is as follows. Component of the A-type ATP synthase that produces ATP from ADP in the presence of a proton gradient across the membrane. The A chain is the catalytic subunit. In Methanospirillum hungatei JF-1 (strain ATCC 27890 / DSM 864 / NBRC 100397 / JF-1), this protein is A-type ATP synthase subunit A 3.